Here is a 233-residue protein sequence, read N- to C-terminus: 5'-methylthioadenosine/S-adenosylhomocysteine nucleosidase (233 aa).

Glu-12 acts as the Proton acceptor in catalysis. Substrate is bound by residues Gly-78, Ile-152, and 173-174 (ME). Asp-197 functions as the Proton donor in the catalytic mechanism.

Belongs to the PNP/UDP phosphorylase family. MtnN subfamily. As to quaternary structure, homodimer.

The catalysed reaction is S-adenosyl-L-homocysteine + H2O = S-(5-deoxy-D-ribos-5-yl)-L-homocysteine + adenine. It catalyses the reaction S-methyl-5'-thioadenosine + H2O = 5-(methylsulfanyl)-D-ribose + adenine. It carries out the reaction 5'-deoxyadenosine + H2O = 5-deoxy-D-ribose + adenine. The protein operates within amino-acid biosynthesis; L-methionine biosynthesis via salvage pathway; S-methyl-5-thio-alpha-D-ribose 1-phosphate from S-methyl-5'-thioadenosine (hydrolase route): step 1/2. Catalyzes the irreversible cleavage of the glycosidic bond in both 5'-methylthioadenosine (MTA) and S-adenosylhomocysteine (SAH/AdoHcy) to adenine and the corresponding thioribose, 5'-methylthioribose and S-ribosylhomocysteine, respectively. Also cleaves 5'-deoxyadenosine, a toxic by-product of radical S-adenosylmethionine (SAM) enzymes, into 5-deoxyribose and adenine. Thus, is required for in vivo function of the radical SAM enzymes biotin synthase and lipoic acid synthase, that are inhibited by 5'-deoxyadenosine accumulation. This Yersinia enterocolitica serotype O:8 / biotype 1B (strain NCTC 13174 / 8081) protein is 5'-methylthioadenosine/S-adenosylhomocysteine nucleosidase.